The chain runs to 277 residues: Carbonyl reductase [NADPH] 1 (277 aa).

At serine 2 the chain carries N-acetylserine. Phosphoserine occurs at positions 2 and 30. NADP(+) contacts are provided by residues 10–34, 63–64, and asparagine 90; these read VTGA…GDVV and DI. Glutathione-binding positions include 95-97 and glutamine 106; that span reads FKV. A substrate-binding site is contributed by serine 140. Position 193–194 (193–194) interacts with glutathione; it reads AY. Tyrosine 194 (proton acceptor) is an active-site residue. NADP(+) contacts are provided by residues 194-198 and 231-233; these read YGVTK and VRT. Lysine 239 is subject to N6-1-carboxyethyl lysine. The disordered stretch occupies residues 258 to 277; that stretch reads PPDAEGPHGQFVQDKKVEPW.

This sequence belongs to the short-chain dehydrogenases/reductases (SDR) family. As to quaternary structure, monomer.

The protein localises to the cytoplasm. It carries out the reaction a secondary alcohol + NADP(+) = a ketone + NADPH + H(+). The enzyme catalyses prostaglandin F2alpha + NADP(+) = prostaglandin E2 + NADPH + H(+). The catalysed reaction is prostaglandin E1 + NADP(+) = 15-oxoprostaglandin E1 + NADPH + H(+). It catalyses the reaction menadione + NADPH + H(+) = menadiol + NADP(+). It carries out the reaction prostaglandin D2 + NADP(+) = 15-oxoprostaglandin D2 + NADPH + H(+). The enzyme catalyses prostaglandin E2 + NADP(+) = 15-oxoprostaglandin E2 + NADPH + H(+). The catalysed reaction is prostaglandin F2alpha + NADP(+) = 15-oxoprostaglandin F2alpha + NADPH + H(+). It catalyses the reaction daunorubicin + NADPH + H(+) = 13-dihydrodaunorubicin + NADP(+). It carries out the reaction S-nitrosoglutathione + NADPH + H(+) = S-(hydroxysulfenamide)glutathione + NADP(+). The enzyme catalyses corticosterone + NADPH + H(+) = 20beta-dihydrocorticosterone + NADP(+). The catalysed reaction is a primary alcohol + NADP(+) = an aldehyde + NADPH + H(+). It catalyses the reaction cortisol + NADPH + H(+) = 20beta-dihydrocortisol + NADP(+). In terms of biological role, NADPH-dependent reductase with broad substrate specificity. Catalyzes the reduction of a wide variety of carbonyl compounds including quinones, prostaglandins, menadione, plus various xenobiotics. Catalyzes the reduction of the antitumor anthracyclines doxorubicin and daunorubicin to the cardiotoxic compounds doxorubicinol and daunorubicinol. Can convert prostaglandin E to prostaglandin F2-alpha. Can bind glutathione, which explains its higher affinity for glutathione-conjugated substrates. Catalyzes the reduction of S-nitrosoglutathione. In addition, participates in the glucocorticoid metabolism by catalyzing the NADPH-dependent cortisol/corticosterone into 20beta-dihydrocortisol (20b-DHF) or 20beta-corticosterone (20b-DHB), which are weak agonists of NR3C1 and NR3C2 in adipose tissue. This Mus musculus (Mouse) protein is Carbonyl reductase [NADPH] 1.